Here is a 75-residue protein sequence, read N- to C-terminus: Small ribosomal subunit protein bS18 (75 aa).

Belongs to the bacterial ribosomal protein bS18 family. In terms of assembly, part of the 30S ribosomal subunit. Forms a tight heterodimer with protein bS6.

Binds as a heterodimer with protein bS6 to the central domain of the 16S rRNA, where it helps stabilize the platform of the 30S subunit. In Shewanella frigidimarina (strain NCIMB 400), this protein is Small ribosomal subunit protein bS18.